Reading from the N-terminus, the 287-residue chain is tRNA (guanine(9)-N1)-methyltransferase (287 aa).

The segment at 1 to 27 is disordered; the sequence is MSDTSDLVDGKWQRLPPVPEGMSKSQW. The SAM-dependent MTase TRM10-type domain occupies 79 to 272; sequence EPRVNRDQVA…SVIPSRKLDP (194 aa). Residues 179-180, Gly199, 203-207, Cys211, Leu225, and 237-239 each bind S-adenosyl-L-methionine; these read LT, DKNRH, and KVL. Residue Asp203 is the Proton acceptor of the active site. Over residues 268 to 278 the composition is skewed to basic and acidic residues; it reads RKLDPVKEKEQ. A disordered region spans residues 268–287; it reads RKLDPVKEKEQQQQQQQQQQ.

The protein belongs to the class IV-like SAM-binding methyltransferase superfamily. TRM10 family. Monomer.

It is found in the cytoplasm. Its subcellular location is the nucleus. It carries out the reaction guanosine(9) in tRNA + S-adenosyl-L-methionine = N(1)-methylguanosine(9) in tRNA + S-adenosyl-L-homocysteine + H(+). Its function is as follows. S-adenosyl-L-methionine-dependent guanine N(1)-methyltransferase that catalyzes the formation of N(1)-methylguanine at position 9 (m1G9) in cytoplasmic tRNA. The sequence is that of tRNA (guanine(9)-N1)-methyltransferase from Candida glabrata (strain ATCC 2001 / BCRC 20586 / JCM 3761 / NBRC 0622 / NRRL Y-65 / CBS 138) (Yeast).